A 583-amino-acid polypeptide reads, in one-letter code: L-arabonate dehydratase (583 aa).

[4Fe-4S] cluster-binding residues include Cys-56, Cys-124, and Cys-197.

The protein belongs to the IlvD/Edd family. Homodimer. [4Fe-4S] cluster serves as cofactor.

The enzyme catalyses L-arabinonate = 2-dehydro-3-deoxy-L-arabinonate + H2O. Activity is enhanced by Mg(2+), being optimal with a concentration of 1-10 mM Mg(2+). Catalyzes the dehydration of L-arabonate to L-2-keto-3-deoxyarabonate (L-KDA). Is involved in a degradation pathway of L-arabinose that allows A.brasilense to grow on L-arabinose as a sole carbon source. To a lesser extent, can also use D-xylonate as substrate, but not D-galactonate, D-arabonate, and D-gluconate. The sequence is that of L-arabonate dehydratase (araC) from Azospirillum brasilense.